A 370-amino-acid chain; its full sequence is Dihydroorotate dehydrogenase (quinone) (370 aa).

FMN-binding positions include 80–84 and Thr-104; that span reads AGFDK. Residue Lys-84 participates in substrate binding. Residue 129 to 133 participates in substrate binding; sequence NRMGF. FMN contacts are provided by Asn-157 and Asn-190. Asn-190 contacts substrate. The active-site Nucleophile is the Ser-193. Asn-195 is a binding site for substrate. FMN-binding residues include Lys-226 and Thr-254. 255 to 256 contributes to the substrate binding site; sequence NT. FMN is bound by residues Gly-278, Gly-307, and 328–329; that span reads YT.

It belongs to the dihydroorotate dehydrogenase family. Type 2 subfamily. Monomer. The cofactor is FMN.

It localises to the cell membrane. It carries out the reaction (S)-dihydroorotate + a quinone = orotate + a quinol. Its pathway is pyrimidine metabolism; UMP biosynthesis via de novo pathway; orotate from (S)-dihydroorotate (quinone route): step 1/1. Catalyzes the conversion of dihydroorotate to orotate with quinone as electron acceptor. The protein is Dihydroorotate dehydrogenase (quinone) of Mycolicibacterium paratuberculosis (strain ATCC BAA-968 / K-10) (Mycobacterium paratuberculosis).